The following is a 396-amino-acid chain: S-adenosylmethionine synthase (396 aa).

Residue His-16 participates in ATP binding. Mg(2+) is bound at residue Asp-18. Residue Glu-44 coordinates K(+). L-methionine-binding residues include Glu-57 and Gln-100. The segment at 100–110 (QSQDIARGVDN) is flexible loop. ATP contacts are provided by residues 162–164 (DGK), 228–229 (RF), Asp-237, 243–244 (RK), Ala-260, and Lys-264. Position 237 (Asp-237) interacts with L-methionine. Lys-268 is a binding site for L-methionine.

Belongs to the AdoMet synthase family. As to quaternary structure, homotetramer; dimer of dimers. Mg(2+) is required as a cofactor. Requires K(+) as cofactor.

Its subcellular location is the cytoplasm. It catalyses the reaction L-methionine + ATP + H2O = S-adenosyl-L-methionine + phosphate + diphosphate. It participates in amino-acid biosynthesis; S-adenosyl-L-methionine biosynthesis; S-adenosyl-L-methionine from L-methionine: step 1/1. Its function is as follows. Catalyzes the formation of S-adenosylmethionine (AdoMet) from methionine and ATP. The overall synthetic reaction is composed of two sequential steps, AdoMet formation and the subsequent tripolyphosphate hydrolysis which occurs prior to release of AdoMet from the enzyme. This chain is S-adenosylmethionine synthase, found in Myxococcus xanthus (strain DK1622).